The following is a 458-amino-acid chain: Bifunctional protein HldE (458 aa).

The ribokinase stretch occupies residues Met-1–Phe-311. Asn-189–Glu-192 provides a ligand contact to ATP. The active site involves Asp-257. The segment at Phe-333–Gly-458 is cytidylyltransferase.

The protein in the N-terminal section; belongs to the carbohydrate kinase PfkB family. This sequence in the C-terminal section; belongs to the cytidylyltransferase family. Homodimer.

It carries out the reaction D-glycero-beta-D-manno-heptose 7-phosphate + ATP = D-glycero-beta-D-manno-heptose 1,7-bisphosphate + ADP + H(+). The enzyme catalyses D-glycero-beta-D-manno-heptose 1-phosphate + ATP + H(+) = ADP-D-glycero-beta-D-manno-heptose + diphosphate. It participates in nucleotide-sugar biosynthesis; ADP-L-glycero-beta-D-manno-heptose biosynthesis; ADP-L-glycero-beta-D-manno-heptose from D-glycero-beta-D-manno-heptose 7-phosphate: step 1/4. Its pathway is nucleotide-sugar biosynthesis; ADP-L-glycero-beta-D-manno-heptose biosynthesis; ADP-L-glycero-beta-D-manno-heptose from D-glycero-beta-D-manno-heptose 7-phosphate: step 3/4. Functionally, catalyzes the phosphorylation of D-glycero-D-manno-heptose 7-phosphate at the C-1 position to selectively form D-glycero-beta-D-manno-heptose-1,7-bisphosphate. Catalyzes the ADP transfer from ATP to D-glycero-beta-D-manno-heptose 1-phosphate, yielding ADP-D-glycero-beta-D-manno-heptose. In Campylobacter fetus subsp. fetus (strain 82-40), this protein is Bifunctional protein HldE.